The following is a 370-amino-acid chain: Chorismate synthase (370 aa).

A disordered region spans residues 41–60; sequence IQGDLDRRKPGTSRHVTQRK. Positions 48 and 54 each coordinate NADP(+). FMN contacts are provided by residues 125-127, 238-239, G278, 293-297, and R319; these read RSS, NA, and KPTSS.

Belongs to the chorismate synthase family. In terms of assembly, homotetramer. FMNH2 is required as a cofactor.

It carries out the reaction 5-O-(1-carboxyvinyl)-3-phosphoshikimate = chorismate + phosphate. The protein operates within metabolic intermediate biosynthesis; chorismate biosynthesis; chorismate from D-erythrose 4-phosphate and phosphoenolpyruvate: step 7/7. Its function is as follows. Catalyzes the anti-1,4-elimination of the C-3 phosphate and the C-6 proR hydrogen from 5-enolpyruvylshikimate-3-phosphate (EPSP) to yield chorismate, which is the branch point compound that serves as the starting substrate for the three terminal pathways of aromatic amino acid biosynthesis. This reaction introduces a second double bond into the aromatic ring system. In Cupriavidus pinatubonensis (strain JMP 134 / LMG 1197) (Cupriavidus necator (strain JMP 134)), this protein is Chorismate synthase.